Reading from the N-terminus, the 252-residue chain is 5-oxoprolinase subunit A (252 aa).

The protein belongs to the LamB/PxpA family. Forms a complex composed of PxpA, PxpB and PxpC.

The catalysed reaction is 5-oxo-L-proline + ATP + 2 H2O = L-glutamate + ADP + phosphate + H(+). Its function is as follows. Catalyzes the cleavage of 5-oxoproline to form L-glutamate coupled to the hydrolysis of ATP to ADP and inorganic phosphate. In Staphylococcus saprophyticus subsp. saprophyticus (strain ATCC 15305 / DSM 20229 / NCIMB 8711 / NCTC 7292 / S-41), this protein is 5-oxoprolinase subunit A.